The chain runs to 277 residues: Large ribosomal subunit protein uL2 (277 aa).

3 disordered regions span residues 1-23, 36-58, and 219-277; these read MAIK…DFAE, PLHK…GGGH, and TVRG…RKNK. The span at 8–20 shows a compositional bias: polar residues; that stretch reads PTSNGRRGMTSSD. The segment covering 258–277 has biased composition (basic residues); sequence KTRKKKNKSDKFIVRRRKNK.

Belongs to the universal ribosomal protein uL2 family. As to quaternary structure, part of the 50S ribosomal subunit. Forms a bridge to the 30S subunit in the 70S ribosome.

Its function is as follows. One of the primary rRNA binding proteins. Required for association of the 30S and 50S subunits to form the 70S ribosome, for tRNA binding and peptide bond formation. It has been suggested to have peptidyltransferase activity; this is somewhat controversial. Makes several contacts with the 16S rRNA in the 70S ribosome. The chain is Large ribosomal subunit protein uL2 from Bacillus licheniformis (strain ATCC 14580 / DSM 13 / JCM 2505 / CCUG 7422 / NBRC 12200 / NCIMB 9375 / NCTC 10341 / NRRL NRS-1264 / Gibson 46).